A 591-amino-acid chain; its full sequence is MTLRPSRRAVLSAAAVLLTGCSEVPSQGPVKRADGPRAAAQESIDVAPHPPADGASIDLVVGGFLQAMASARDDYRVARSYLTSDIADRWDPHAKVTIYDATNHKPASTVATAALQAPVVGQIDSRGHYHPTSSQTLNHDFGMAQESGQWRISRPPEGVLISQYTFQRSWSTIPIYFLTEAADRLVPDVIHLPSAAADPDAALRAMTAGVPKPLDAVLRTALPDGVTVTGTTSVDAVGVVTVPLSASAAQLSPSQRRLLASQVTWTLNGFAAISRVRFTAGGSLLSLPEAAEDQTVSADLYAEFIPLPATHSPTVVAVIKGQMGRVAASGHNFQIMPGALGREATTNNSVAEVASTQLTMPMISPRSPGAVWHAVSADRRSLLTWQEGSEDIQVLATGVNLLRPQVLGDHSIMTFSDTDPTLIVIGSDGTRMSTVVDLGGRRVRSFSVAPDAVQVALVLERGKTRALGIGLLSRQEGAVHLSHIADIPLSSSDVNLSIITDVAWLSQTRLCVLGRAIDAGVTTPYEIAVDGSGATSMGQLTATSMAAVVALPKETGTEAVVLSEDGILLRHEDSFRWRQILQGVSAVAVTA.

The N-terminal stretch at 1-20 (MTLRPSRRAVLSAAAVLLTG) is a signal peptide. A lipid anchor (N-palmitoyl cysteine) is attached at C21. C21 carries S-diacylglycerol cysteine lipidation.

The protein belongs to the LpqB lipoprotein family.

The protein resides in the cell membrane. The protein is Lipoprotein LpqB of Cutibacterium acnes (strain DSM 16379 / KPA171202) (Propionibacterium acnes).